A 779-amino-acid chain; its full sequence is Translation initiation factor IF-2 (779 aa).

A disordered region spans residues 44 to 193 (RQLDNAVDGT…TPPKPKELPE (150 aa)). Residues 53-65 (TNKKAEAPKKETT) show a composition bias toward basic and acidic residues. A compositionally biased stretch (polar residues) spans 66–81 (SNENGNSKGPNKPNMT). Low complexity-rich tracts occupy residues 82–93 (NSNEKSNKPNKP) and 117–167 (ANTS…NNKG). Residues 280–449 (ERPPVVTIMG…LLVSEVEELK (170 aa)) enclose the tr-type G domain. Positions 289–296 (GHVDHGKT) are G1. 289–296 (GHVDHGKT) serves as a coordination point for GTP. Residues 314–318 (GITQH) are G2. Residues 335–338 (DTPG) are G3. Residues 335-339 (DTPGH) and 389-392 (NKID) contribute to the GTP site. Residues 389 to 392 (NKID) are G4. The segment at 425-427 (SAK) is G5.

It belongs to the TRAFAC class translation factor GTPase superfamily. Classic translation factor GTPase family. IF-2 subfamily.

It localises to the cytoplasm. One of the essential components for the initiation of protein synthesis. Protects formylmethionyl-tRNA from spontaneous hydrolysis and promotes its binding to the 30S ribosomal subunits. Also involved in the hydrolysis of GTP during the formation of the 70S ribosomal complex. This is Translation initiation factor IF-2 from Listeria monocytogenes serovar 1/2a (strain ATCC BAA-679 / EGD-e).